Reading from the N-terminus, the 274-residue chain is Kit ligand (274 aa).

The N-terminal stretch at 1 to 25 is a signal peptide; that stretch reads MKKTQTWIITCIYLQLLLFNPLVRT. The Extracellular portion of the chain corresponds to 26-215; it reads KGICRNRVTD…ANPLGDSNLQ (190 aa). Disulfide bonds link Cys29–Cys114 and Cys68–Cys164. Residues Asn90, Asn97, Asn145, and Asn196 are each glycosylated (N-linked (GlcNAc...) asparagine). The chain crosses the membrane as a helical span at residues 216-238; it reads WAAMALPAFFSLVIGFAFGALYW. The Cytoplasmic portion of the chain corresponds to 239 to 274; the sequence is KKKQPNLTRTAENIQINEEDNEISMLQEKEREFQEV.

Belongs to the SCF family. In terms of assembly, homodimer, non-covalently linked. Heterotetramer with KIT, binding two KIT molecules; thereby mediates KIT dimerization and subsequent activation by autophosphorylation. A soluble form is produced by proteolytic processing of isoform 1 in the extracellular domain.

The protein resides in the cytoplasm. Its subcellular location is the cytoskeleton. The protein localises to the cell membrane. It is found in the cell projection. It localises to the lamellipodium. The protein resides in the filopodium. Its subcellular location is the secreted. Its function is as follows. Ligand for the receptor-type protein-tyrosine kinase KIT. Plays an essential role in the regulation of cell survival and proliferation, hematopoiesis, stem cell maintenance, gametogenesis, mast cell development, migration and function, and in melanogenesis. KITLG/SCF binding can activate several signaling pathways. Promotes phosphorylation of PIK3R1, the regulatory subunit of phosphatidylinositol 3-kinase, and subsequent activation of the kinase AKT1. KITLG/SCF and KIT also transmit signals via GRB2 and activation of RAS, RAF1 and the MAP kinases MAPK1/ERK2 and/or MAPK3/ERK1. KITLG/SCF and KIT promote activation of STAT family members STAT1, STAT3 and STAT5. KITLG/SCF and KIT promote activation of PLCG1, leading to the production of the cellular signaling molecules diacylglycerol and inositol 1,4,5-trisphosphate. KITLG/SCF acts synergistically with other cytokines, probably interleukins. The sequence is that of Kit ligand (KITLG) from Neovison vison (American mink).